The chain runs to 294 residues: Acetyl-coenzyme A carboxylase carboxyl transferase subunit beta (294 aa).

The 265-residue stretch at 30-294 (IMTKCPECKK…PEAGGESDGE (265 aa)) folds into the CoA carboxyltransferase N-terminal domain. 4 residues coordinate Zn(2+): cysteine 34, cysteine 37, cysteine 53, and cysteine 56. Residues 34–56 (CPECKKIMYTKELQKNLMVCNYC) form a C4-type zinc finger.

This sequence belongs to the AccD/PCCB family. Acetyl-CoA carboxylase is a heterohexamer composed of biotin carboxyl carrier protein (AccB), biotin carboxylase (AccC) and two subunits each of ACCase subunit alpha (AccA) and ACCase subunit beta (AccD). Requires Zn(2+) as cofactor.

The protein localises to the cytoplasm. The enzyme catalyses N(6)-carboxybiotinyl-L-lysyl-[protein] + acetyl-CoA = N(6)-biotinyl-L-lysyl-[protein] + malonyl-CoA. It participates in lipid metabolism; malonyl-CoA biosynthesis; malonyl-CoA from acetyl-CoA: step 1/1. Component of the acetyl coenzyme A carboxylase (ACC) complex. Biotin carboxylase (BC) catalyzes the carboxylation of biotin on its carrier protein (BCCP) and then the CO(2) group is transferred by the transcarboxylase to acetyl-CoA to form malonyl-CoA. The sequence is that of Acetyl-coenzyme A carboxylase carboxyl transferase subunit beta from Listeria innocua serovar 6a (strain ATCC BAA-680 / CLIP 11262).